The primary structure comprises 307 residues: Probable rRNA-processing protein EBP2 homolog (307 aa).

3 disordered regions span residues 1 to 22 (MSDF…SDAE), 189 to 208 (QRKM…EAEK), and 236 to 307 (ESKQ…KGRK). The stretch at 205–252 (EAEKKDMLDKLKKFRKGKLKNLDFLEDAKALESKQKQSAENRKKRNKK) forms a coiled coil. Basic and acidic residues predominate over residues 236-245 (ESKQKQSAEN). 2 stretches are compositionally biased toward basic residues: residues 246 to 266 (RKKR…KRNT) and 294 to 307 (RLGK…KGRK).

This sequence belongs to the EBP2 family.

Its subcellular location is the nucleus. The protein resides in the nucleolus. Functionally, required for the processing of the 27S pre-rRNA. This chain is Probable rRNA-processing protein EBP2 homolog, found in Drosophila melanogaster (Fruit fly).